The following is a 158-amino-acid chain: Siroheme decarboxylase beta subunit (158 aa).

The protein belongs to the Ahb/Nir family. Forms a heterodimer composed of AhbA and AhbB.

The catalysed reaction is siroheme + 2 H(+) = 12,18-didecarboxysiroheme + 2 CO2. The protein operates within porphyrin-containing compound metabolism; protoheme biosynthesis. Functionally, involved in siroheme-dependent heme b biosynthesis. Catalyzes the decarboxylation of siroheme into didecarboxysiroheme. The chain is Siroheme decarboxylase beta subunit from Oleidesulfovibrio alaskensis (strain ATCC BAA-1058 / DSM 17464 / G20) (Desulfovibrio alaskensis).